The primary structure comprises 1450 residues: DNA-directed RNA polymerase RPB1 homolog (1450 aa).

Belongs to the RNA polymerase beta' chain family. As to quaternary structure, part of the viral DNA-directed RNA polymerase that consists of 8 polII-like subunits (RPB1, RPB2, RPB3, RPB5, RPB6, RPB7, RPB9, RPB10), a capping enzyme and a termination factor.

Its subcellular location is the virion. The catalysed reaction is RNA(n) + a ribonucleoside 5'-triphosphate = RNA(n+1) + diphosphate. Its function is as follows. Catalytic component of the DNA-directed RNA polymerase (RNAP) that catalyzes the transcription in the cytoplasm of viral DNA into RNA using the four ribonucleoside triphosphates as substrates. Forms the polymerase active center together with RPB2. Part of the core element with the central large cleft, the clamp element that moves to open and close the cleft and the jaws that are thought to grab the incoming DNA template. The sequence is that of DNA-directed RNA polymerase RPB1 homolog from African swine fever virus (strain Badajoz 1971 Vero-adapted) (Ba71V).